The following is a 315-amino-acid chain: DNA-directed RNA polymerase subunit alpha (315 aa).

An alpha N-terminal domain (alpha-NTD) region spans residues 1-228 (MIEMEKPKVE…EHLNLFITLK (228 aa)). The alpha C-terminal domain (alpha-CTD) stretch occupies residues 245–315 (KEKVLEMTIE…LGLGLRPSDE (71 aa)).

It belongs to the RNA polymerase alpha chain family. As to quaternary structure, homodimer. The RNAP catalytic core consists of 2 alpha, 1 beta, 1 beta' and 1 omega subunit. When a sigma factor is associated with the core the holoenzyme is formed, which can initiate transcription.

The enzyme catalyses RNA(n) + a ribonucleoside 5'-triphosphate = RNA(n+1) + diphosphate. In terms of biological role, DNA-dependent RNA polymerase catalyzes the transcription of DNA into RNA using the four ribonucleoside triphosphates as substrates. This is DNA-directed RNA polymerase subunit alpha from Alkaliphilus metalliredigens (strain QYMF).